The chain runs to 859 residues: Leucine--tRNA ligase (859 aa).

The 'HIGH' region motif lies at 42–52; that stretch reads PYPSGRLHMGH. The 'KMSKS' region motif lies at 618–622; sequence KMSKS. Lys-621 lines the ATP pocket.

This sequence belongs to the class-I aminoacyl-tRNA synthetase family.

Its subcellular location is the cytoplasm. The enzyme catalyses tRNA(Leu) + L-leucine + ATP = L-leucyl-tRNA(Leu) + AMP + diphosphate. This chain is Leucine--tRNA ligase, found in Shewanella amazonensis (strain ATCC BAA-1098 / SB2B).